A 252-amino-acid polypeptide reads, in one-letter code: Eukaryotic translation initiation factor 3 subunit K (252 aa).

One can recognise a PCI domain in the interval 46–225; the sequence is FDCYANLALL…VKVPTNKENE (180 aa).

It belongs to the eIF-3 subunit K family. As to quaternary structure, component of the eukaryotic translation initiation factor 3 (eIF-3) complex.

The protein resides in the cytoplasm. Functionally, component of the eukaryotic translation initiation factor 3 (eIF-3) complex, which is involved in protein synthesis of a specialized repertoire of mRNAs and, together with other initiation factors, stimulates binding of mRNA and methionyl-tRNAi to the 40S ribosome. The eIF-3 complex specifically targets and initiates translation of a subset of mRNAs involved in cell proliferation. In Aspergillus terreus (strain NIH 2624 / FGSC A1156), this protein is Eukaryotic translation initiation factor 3 subunit K.